A 692-amino-acid chain; its full sequence is Elongation factor G (692 aa).

Positions 8-282 (AKTRNIGIMA…AVIDYLPSPL (275 aa)) constitute a tr-type G domain. Residues 17 to 24 (AHVDAGKT), 81 to 85 (DTPGH), and 135 to 138 (NKMD) each bind GTP.

This sequence belongs to the TRAFAC class translation factor GTPase superfamily. Classic translation factor GTPase family. EF-G/EF-2 subfamily.

It is found in the cytoplasm. Its function is as follows. Catalyzes the GTP-dependent ribosomal translocation step during translation elongation. During this step, the ribosome changes from the pre-translocational (PRE) to the post-translocational (POST) state as the newly formed A-site-bound peptidyl-tRNA and P-site-bound deacylated tRNA move to the P and E sites, respectively. Catalyzes the coordinated movement of the two tRNA molecules, the mRNA and conformational changes in the ribosome. This chain is Elongation factor G, found in Streptococcus uberis (strain ATCC BAA-854 / 0140J).